The chain runs to 83 residues: Bowman-Birk type seed trypsin and chymotrypsin inhibitor (83 aa).

Cystine bridges form between Cys18–Cys72, Cys19–Cys34, Cys22–Cys68, Cys24–Cys32, Cys42–Cys49, Cys46–Cys61, and Cys51–Cys59.

This sequence belongs to the Bowman-Birk serine protease inhibitor family.

The protein is Bowman-Birk type seed trypsin and chymotrypsin inhibitor of Vigna unguiculata (Cowpea).